The following is a 177-amino-acid chain: ATP synthase subunit delta (177 aa).

This sequence belongs to the ATPase delta chain family. As to quaternary structure, F-type ATPases have 2 components, F(1) - the catalytic core - and F(0) - the membrane proton channel. F(1) has five subunits: alpha(3), beta(3), gamma(1), delta(1), epsilon(1). F(0) has three main subunits: a(1), b(2) and c(10-14). The alpha and beta chains form an alternating ring which encloses part of the gamma chain. F(1) is attached to F(0) by a central stalk formed by the gamma and epsilon chains, while a peripheral stalk is formed by the delta and b chains.

The protein localises to the cell inner membrane. F(1)F(0) ATP synthase produces ATP from ADP in the presence of a proton or sodium gradient. F-type ATPases consist of two structural domains, F(1) containing the extramembraneous catalytic core and F(0) containing the membrane proton channel, linked together by a central stalk and a peripheral stalk. During catalysis, ATP synthesis in the catalytic domain of F(1) is coupled via a rotary mechanism of the central stalk subunits to proton translocation. Functionally, this protein is part of the stalk that links CF(0) to CF(1). It either transmits conformational changes from CF(0) to CF(1) or is implicated in proton conduction. The protein is ATP synthase subunit delta of Azobacteroides pseudotrichonymphae genomovar. CFP2.